Here is a 199-residue protein sequence, read N- to C-terminus: Chromophore lyase CpcT/CpeT (199 aa).

It belongs to the CpcT/CpeT biliprotein lyase family.

Its function is as follows. Covalently attaches a chromophore to Cys residue(s) of phycobiliproteins. The protein is Chromophore lyase CpcT/CpeT of Prochlorococcus marinus (strain NATL1A).